The chain runs to 41 residues: Large ribosomal subunit protein bL36 (41 aa).

This sequence belongs to the bacterial ribosomal protein bL36 family.

This Ruegeria sp. (strain TM1040) (Silicibacter sp.) protein is Large ribosomal subunit protein bL36.